A 209-amino-acid polypeptide reads, in one-letter code: PRA1 family protein A2 (209 aa).

4 consecutive transmembrane segments (helical) span residues 51-72, 76-98, 142-162, and 163-183; these read LYYY…ALVT, ALVG…AASF, RWVF…SSCG, and LLWV…HASI.

This sequence belongs to the PRA1 family.

It is found in the endosome membrane. In terms of biological role, may be involved in both secretory and endocytic intracellular trafficking in the endosomal/prevacuolar compartments. In Arabidopsis thaliana (Mouse-ear cress), this protein is PRA1 family protein A2 (PRA1A2).